The following is a 180-amino-acid chain: Lipid droplet coating protein Cap20 (180 aa).

This sequence belongs to the perilipin family. In terms of assembly, interacts with class I hydrophobin Hydr1. Interacts also with the cAMP-dependent protein kinase catalytic subunit PkaC1.

It is found in the lipid droplet. In terms of biological role, lipid droplet coating protein that regulates lipid metabolism, appressorial turgor pressure, and virulence. Mature appressoria with high turgor pressure are essential to penetrate the leaf surface. The polypeptide is Lipid droplet coating protein Cap20 (Colletotrichum siamense (Anthracnose fungus)).